Consider the following 413-residue polypeptide: MAP kinase-interacting serine/threonine-protein kinase 1 (413 aa).

The tract at residues 1-26 (MGSSEPLPIVDSDKRRKKKRKTRATD) is disordered. T22 carries the phosphothreonine; by PAK2 modification. The residue at position 27 (S27) is a Phosphoserine; by PAK2. In terms of domain architecture, Protein kinase spans 37 to 321 (QLTSELLGEG…AAQVLQHPWV (285 aa)). ATP contacts are provided by residues 43–51 (LGEGAYAKV) and K66. D158 functions as the Proton acceptor in the catalytic mechanism. S168 and S173 each carry phosphoserine. Phosphothreonine occurs at positions 197, 202, and 332.

This sequence belongs to the protein kinase superfamily. CAMK Ser/Thr protein kinase family. In terms of assembly, interacts with the C-terminal regions of EIF4G1 and EIF4G2. Also binds to dephosphorylated ERK1 and ERK2, and to the p38 kinases. Mg(2+) serves as cofactor. In terms of processing, dual phosphorylation of Thr-197 and Thr-202 activates the kinase. Phosphorylation of Thr-332 activates the kinase. MAPK3/ERK1 is one of the kinases which activate MKNK1/MNK1. Phosphorylation by PAK2 leads to a reduced phosphorylation of EIF4G1.

The catalysed reaction is L-seryl-[protein] + ATP = O-phospho-L-seryl-[protein] + ADP + H(+). It catalyses the reaction L-threonyl-[protein] + ATP = O-phospho-L-threonyl-[protein] + ADP + H(+). Its activity is regulated as follows. Phosphorylated and activated by the p38 kinases and kinases in the Erk pathway. In terms of biological role, may play a role in the response to environmental stress and cytokines. Appears to regulate translation by phosphorylating EIF4E, thus increasing the affinity of this protein for the 7-methylguanosine-containing mRNA cap. This chain is MAP kinase-interacting serine/threonine-protein kinase 1 (Mknk1), found in Rattus norvegicus (Rat).